Consider the following 88-residue polypeptide: Small ribosomal subunit protein uS15 (88 aa).

It belongs to the universal ribosomal protein uS15 family. As to quaternary structure, part of the 30S ribosomal subunit. Forms a bridge to the 50S subunit in the 70S ribosome, contacting the 23S rRNA.

Functionally, one of the primary rRNA binding proteins, it binds directly to 16S rRNA where it helps nucleate assembly of the platform of the 30S subunit by binding and bridging several RNA helices of the 16S rRNA. Forms an intersubunit bridge (bridge B4) with the 23S rRNA of the 50S subunit in the ribosome. This Paracidovorax citrulli (strain AAC00-1) (Acidovorax citrulli) protein is Small ribosomal subunit protein uS15.